Here is a 319-residue protein sequence, read N- to C-terminus: Acetyl-coenzyme A carboxylase carboxyl transferase subunit alpha (319 aa).

Positions 38-292 (ALDKKAADLL…GKAIASMLAG (255 aa)) constitute a CoA carboxyltransferase C-terminal domain.

Belongs to the AccA family. Acetyl-CoA carboxylase is a heterohexamer composed of biotin carboxyl carrier protein (AccB), biotin carboxylase (AccC) and two subunits each of ACCase subunit alpha (AccA) and ACCase subunit beta (AccD).

It localises to the cytoplasm. The enzyme catalyses N(6)-carboxybiotinyl-L-lysyl-[protein] + acetyl-CoA = N(6)-biotinyl-L-lysyl-[protein] + malonyl-CoA. It participates in lipid metabolism; malonyl-CoA biosynthesis; malonyl-CoA from acetyl-CoA: step 1/1. Its function is as follows. Component of the acetyl coenzyme A carboxylase (ACC) complex. First, biotin carboxylase catalyzes the carboxylation of biotin on its carrier protein (BCCP) and then the CO(2) group is transferred by the carboxyltransferase to acetyl-CoA to form malonyl-CoA. In Jannaschia sp. (strain CCS1), this protein is Acetyl-coenzyme A carboxylase carboxyl transferase subunit alpha.